We begin with the raw amino-acid sequence, 460 residues long: Bifunctional protein GlmU (460 aa).

Residues Met1 to Arg235 form a pyrophosphorylase region. Residues Leu9–Gly12, Lys23, Gln76, and Gly81–Thr82 contribute to the UDP-N-acetyl-alpha-D-glucosamine site. Position 109 (Asp109) interacts with Mg(2+). UDP-N-acetyl-alpha-D-glucosamine-binding residues include Gly146, Glu161, Asn176, and Asn233. Asn233 lines the Mg(2+) pocket. The interval Val236–Asn256 is linker. Residues Gly257–Arg460 form an N-acetyltransferase region. Positions 338 and 356 each coordinate UDP-N-acetyl-alpha-D-glucosamine. The Proton acceptor role is filled by His368. UDP-N-acetyl-alpha-D-glucosamine contacts are provided by Tyr371 and Asn382. Residues Asn391 to Tyr392 and Ala428 each bind acetyl-CoA.

In the N-terminal section; belongs to the N-acetylglucosamine-1-phosphate uridyltransferase family. It in the C-terminal section; belongs to the transferase hexapeptide repeat family. Homotrimer. Mg(2+) serves as cofactor.

The protein resides in the cytoplasm. It carries out the reaction alpha-D-glucosamine 1-phosphate + acetyl-CoA = N-acetyl-alpha-D-glucosamine 1-phosphate + CoA + H(+). The catalysed reaction is N-acetyl-alpha-D-glucosamine 1-phosphate + UTP + H(+) = UDP-N-acetyl-alpha-D-glucosamine + diphosphate. The protein operates within nucleotide-sugar biosynthesis; UDP-N-acetyl-alpha-D-glucosamine biosynthesis; N-acetyl-alpha-D-glucosamine 1-phosphate from alpha-D-glucosamine 6-phosphate (route II): step 2/2. Its pathway is nucleotide-sugar biosynthesis; UDP-N-acetyl-alpha-D-glucosamine biosynthesis; UDP-N-acetyl-alpha-D-glucosamine from N-acetyl-alpha-D-glucosamine 1-phosphate: step 1/1. It functions in the pathway bacterial outer membrane biogenesis; LPS lipid A biosynthesis. Its function is as follows. Catalyzes the last two sequential reactions in the de novo biosynthetic pathway for UDP-N-acetylglucosamine (UDP-GlcNAc). The C-terminal domain catalyzes the transfer of acetyl group from acetyl coenzyme A to glucosamine-1-phosphate (GlcN-1-P) to produce N-acetylglucosamine-1-phosphate (GlcNAc-1-P), which is converted into UDP-GlcNAc by the transfer of uridine 5-monophosphate (from uridine 5-triphosphate), a reaction catalyzed by the N-terminal domain. This Bifidobacterium longum subsp. infantis (strain ATCC 15697 / DSM 20088 / JCM 1222 / NCTC 11817 / S12) protein is Bifunctional protein GlmU.